Here is a 184-residue protein sequence, read N- to C-terminus: Glutathione-regulated potassium-efflux system ancillary protein KefG (184 aa).

The protein belongs to the NAD(P)H dehydrogenase (quinone) family. KefG subfamily. As to quaternary structure, interacts with KefB.

It localises to the cell inner membrane. The catalysed reaction is a quinone + NADH + H(+) = a quinol + NAD(+). It catalyses the reaction a quinone + NADPH + H(+) = a quinol + NADP(+). Regulatory subunit of a potassium efflux system that confers protection against electrophiles. Required for full activity of KefB. The sequence is that of Glutathione-regulated potassium-efflux system ancillary protein KefG from Cronobacter sakazakii (strain ATCC BAA-894) (Enterobacter sakazakii).